A 189-amino-acid polypeptide reads, in one-letter code: Glucose-6-phosphate isomerase (189 aa).

His88, His90, Glu97, and His136 together coordinate Fe cation.

This sequence belongs to the archaeal-type GPI family. Homodimer.

Its subcellular location is the cytoplasm. The catalysed reaction is alpha-D-glucose 6-phosphate = beta-D-fructose 6-phosphate. Its pathway is carbohydrate degradation; glycolysis; D-glyceraldehyde 3-phosphate and glycerone phosphate from D-glucose: step 2/4. The sequence is that of Glucose-6-phosphate isomerase from Thermococcus kodakarensis (strain ATCC BAA-918 / JCM 12380 / KOD1) (Pyrococcus kodakaraensis (strain KOD1)).